The following is a 151-amino-acid chain: Putative pre-16S rRNA nuclease (151 aa).

The protein belongs to the YqgF nuclease family.

Its subcellular location is the cytoplasm. Could be a nuclease involved in processing of the 5'-end of pre-16S rRNA. In Methylococcus capsulatus (strain ATCC 33009 / NCIMB 11132 / Bath), this protein is Putative pre-16S rRNA nuclease.